Consider the following 90-residue polypeptide: Mitochondrial import inner membrane translocase subunit Tim10 (90 aa).

Positions 29–54 (CHRKCVPPHYKEAELSKGESVCLDRC) match the Twin CX3C motif motif. 2 cysteine pairs are disulfide-bonded: Cys29/Cys54 and Cys33/Cys50.

Belongs to the small Tim family. Heterohexamer; composed of 3 copies of TIMM9 and 3 copies of TIMM10/TIM10A, named soluble 70 kDa complex. The complex forms a 6-bladed alpha-propeller structure and associates with the TIMM22 component of the TIM22 complex. Interacts with multi-pass transmembrane proteins in transit. Also forms a complex composed of TIMM9, TIMM10/TIM10A and FXC1/TIM10B.

Its subcellular location is the mitochondrion inner membrane. Mitochondrial intermembrane chaperone that participates in the import and insertion of multi-pass transmembrane proteins into the mitochondrial inner membrane. May also be required for the transfer of beta-barrel precursors from the TOM complex to the sorting and assembly machinery (SAM complex) of the outer membrane. Acts as a chaperone-like protein that protects the hydrophobic precursors from aggregation and guide them through the mitochondrial intermembrane space. This Rattus norvegicus (Rat) protein is Mitochondrial import inner membrane translocase subunit Tim10 (Timm10).